A 340-amino-acid polypeptide reads, in one-letter code: Heat-inducible transcription repressor HrcA (340 aa).

This sequence belongs to the HrcA family.

Its function is as follows. Negative regulator of class I heat shock genes (grpE-dnaK-dnaJ and groELS operons). Prevents heat-shock induction of these operons. The polypeptide is Heat-inducible transcription repressor HrcA (Burkholderia thailandensis (strain ATCC 700388 / DSM 13276 / CCUG 48851 / CIP 106301 / E264)).